Consider the following 274-residue polypeptide: Rhamnulose-1-phosphate aldolase (274 aa).

Residue glutamate 117 is part of the active site. Histidine 141, histidine 143, and histidine 212 together coordinate Zn(2+).

This sequence belongs to the aldolase class II family. RhaD subfamily. As to quaternary structure, homotetramer. Zn(2+) is required as a cofactor.

It is found in the cytoplasm. The catalysed reaction is L-rhamnulose 1-phosphate = (S)-lactaldehyde + dihydroxyacetone phosphate. Its pathway is carbohydrate degradation; L-rhamnose degradation; glycerone phosphate from L-rhamnose: step 3/3. Its function is as follows. Catalyzes the reversible cleavage of L-rhamnulose-1-phosphate to dihydroxyacetone phosphate (DHAP) and L-lactaldehyde. This Escherichia coli (strain K12 / MC4100 / BW2952) protein is Rhamnulose-1-phosphate aldolase.